A 250-amino-acid chain; its full sequence is MSQAAKASATTAVNPGPDGKGKGAPSTGPAPAPGPTPVPASVPRPAAKVGDLPPGSYRLIVFEQENFQGRRVEFSGECLNLGDRGFDRVRSLIVVSGPWVAFEQSAFRGEMFVLEKGEYPRWDTWTSSYRSDRLMSFRPIRMDSQEHKICLFEGANFKGNTMEIQEDDVPSLWVYGFCDRVGSITVSGGTWVGYQYPGYRGYQYLLEPGDFRHWNEWGAFQPQMQAVRRLRDRQWHQEGCFPVLTAEPPK.

Over residues Met-1–Val-13 the composition is skewed to polar residues. The disordered stretch occupies residues Met-1–Val-49. N-acetylserine is present on Ser-2. Residues Ser-2–Ser-56 form an N-terminal arm region. The segment covering Gly-28–Val-42 has biased composition (pro residues). Beta/gamma crystallin 'Greek key' domains lie at Tyr-57–Ser-96 and Gly-97–Arg-141. The segment at Met-142 to Glu-146 is connecting peptide. Beta/gamma crystallin 'Greek key' domains are found at residues His-147–Gly-188 and Gly-189–Arg-231. The interval Arg-233–Lys-250 is C-terminal arm.

Belongs to the beta/gamma-crystallin family. As to quaternary structure, homo/heterodimer, or complexes of higher-order. The structure of beta-crystallin oligomers seems to be stabilized through interactions between the N-terminal arms. In terms of processing, specific cleavages in the N-terminal arm occur during lens maturation and give rise to truncated forms, leading to impaired oligomerization and protein insolubilization. The protease responsible for this partial degradation could be calpain II.

Crystallins are the dominant structural components of the vertebrate eye lens. In Mus musculus (Mouse), this protein is Beta-crystallin B1 (Crybb1).